The primary structure comprises 319 residues: Annexin A4 (319 aa).

N-acetylalanine is present on A2. Phosphothreonine is present on T7. Phosphoserine is present on S12. Annexin repeat units follow at residues 14-85 (FNAM…GMMT), 86-157 (PTVL…SLSA), 169-241 (ALVR…AIVK), and 245-316 (NKSA…VLCG). K213, K293, and K300 each carry N6-acetyllysine.

This sequence belongs to the annexin family.

The protein resides in the zymogen granule membrane. In terms of biological role, calcium/phospholipid-binding protein which promotes membrane fusion and is involved in exocytosis. This Homo sapiens (Human) protein is Annexin A4.